Consider the following 330-residue polypeptide: ADP-L-glycero-D-manno-heptose-6-epimerase (330 aa).

NADP(+) is bound by residues 11–12 (FI), 32–33 (DN), Lys-39, Lys-54, 75–79 (EGACS), and Asn-92. The Proton acceptor role is filled by Tyr-139. Lys-143 lines the NADP(+) pocket. Substrate is bound at residue Asn-168. Val-169 and Lys-177 together coordinate NADP(+). Residue Lys-177 is the Proton acceptor of the active site. Substrate contacts are provided by residues Arg-179, His-186, 200–203 (FGEY), Arg-213, and Tyr-292.

Belongs to the NAD(P)-dependent epimerase/dehydratase family. HldD subfamily. As to quaternary structure, homopentamer. NADP(+) serves as cofactor.

The enzyme catalyses ADP-D-glycero-beta-D-manno-heptose = ADP-L-glycero-beta-D-manno-heptose. Its pathway is nucleotide-sugar biosynthesis; ADP-L-glycero-beta-D-manno-heptose biosynthesis; ADP-L-glycero-beta-D-manno-heptose from D-glycero-beta-D-manno-heptose 7-phosphate: step 4/4. Catalyzes the interconversion between ADP-D-glycero-beta-D-manno-heptose and ADP-L-glycero-beta-D-manno-heptose via an epimerization at carbon 6 of the heptose. The protein is ADP-L-glycero-D-manno-heptose-6-epimerase of Paraburkholderia xenovorans (strain LB400).